The sequence spans 555 residues: Carboxylic ester hydrolase (555 aa).

The signal sequence occupies residues 1 to 19 (MELSVIALLLLGFVNFSWQ). Cysteine 86 and cysteine 107 are joined by a disulfide. Residues asparagine 120 and asparagine 144 are each glycosylated (N-linked (GlcNAc...) asparagine). The active-site Acyl-ester intermediate is serine 211. A disulfide bridge connects residues cysteine 263 and cysteine 274. Glutamate 336 serves as the catalytic Charge relay system. N-linked (GlcNAc...) asparagine glycosylation is found at asparagine 369 and asparagine 397. Residue histidine 459 is the Charge relay system of the active site. Asparagine 473 and asparagine 533 each carry an N-linked (GlcNAc...) asparagine glycan.

Belongs to the type-B carboxylesterase/lipase family. In terms of processing, N-glycosylated. As to expression, expressed in several tissues, including epidermis (at protein level), fat body (at protein level), gut (at protein level), muscle (at protein level), and venom gland (at protein level).

It localises to the secreted. The catalysed reaction is a carboxylic ester + H2O = an alcohol + a carboxylate + H(+). Its function is as follows. Lipolytic agent that may be involved in distributing the venom via degradation of blood triglycerides. The recombinant protein degrades triglycerides and exhibits high lipolytic activity toward long-chain triglycerides (tested on tributyrin, trioctanoin and triolein). Does not affect mammalian cells. In Bombus ignitus (Bumblebee), this protein is Carboxylic ester hydrolase (vCaE).